Reading from the N-terminus, the 148-residue chain is 3-hydroxyacyl-[acyl-carrier-protein] dehydratase FabZ (148 aa).

Residue His48 is part of the active site.

This sequence belongs to the thioester dehydratase family. FabZ subfamily.

The protein resides in the cytoplasm. It catalyses the reaction a (3R)-hydroxyacyl-[ACP] = a (2E)-enoyl-[ACP] + H2O. Functionally, involved in unsaturated fatty acids biosynthesis. Catalyzes the dehydration of short chain beta-hydroxyacyl-ACPs and long chain saturated and unsaturated beta-hydroxyacyl-ACPs. The sequence is that of 3-hydroxyacyl-[acyl-carrier-protein] dehydratase FabZ from Campylobacter fetus subsp. fetus (strain 82-40).